Here is a 282-residue protein sequence, read N- to C-terminus: Homeobox protein Hox-C12 (282 aa).

2 disordered regions span residues Tyr-94 to Pro-129 and Gly-147 to Ser-214. Positions Ser-162–Leu-175 are enriched in low complexity. Residues Ser-214–Leu-273 constitute a DNA-binding region (homeobox).

It belongs to the Abd-B homeobox family.

It is found in the nucleus. Sequence-specific transcription factor which is part of a developmental regulatory system that provides cells with specific positional identities on the anterior-posterior axis. This chain is Homeobox protein Hox-C12 (HOXC12), found in Homo sapiens (Human).